We begin with the raw amino-acid sequence, 274 residues long: Shikimate kinase (274 aa).

86–96 (PVGKGLKSSSA) lines the ATP pocket.

This sequence belongs to the GHMP kinase family. Archaeal shikimate kinase subfamily.

Its subcellular location is the cytoplasm. It carries out the reaction shikimate + ATP = 3-phosphoshikimate + ADP + H(+). It participates in metabolic intermediate biosynthesis; chorismate biosynthesis; chorismate from D-erythrose 4-phosphate and phosphoenolpyruvate: step 5/7. This chain is Shikimate kinase (aroK), found in Pyrococcus abyssi (strain GE5 / Orsay).